We begin with the raw amino-acid sequence, 128 residues long: Ribonuclease P protein component (128 aa).

The protein belongs to the RnpA family. Consists of a catalytic RNA component (M1 or rnpB) and a protein subunit.

The enzyme catalyses Endonucleolytic cleavage of RNA, removing 5'-extranucleotides from tRNA precursor.. Its function is as follows. RNaseP catalyzes the removal of the 5'-leader sequence from pre-tRNA to produce the mature 5'-terminus. It can also cleave other RNA substrates such as 4.5S RNA. The protein component plays an auxiliary but essential role in vivo by binding to the 5'-leader sequence and broadening the substrate specificity of the ribozyme. The chain is Ribonuclease P protein component from Methylococcus capsulatus (strain ATCC 33009 / NCIMB 11132 / Bath).